The sequence spans 762 residues: ATP-dependent RNA helicase SUV3 homolog, mitochondrial (762 aa).

The transit peptide at 1–36 (MQNTRRCISLICVTRQPPSLRATYGAVAAARCLHRA) directs the protein to the mitochondrion. The Helicase ATP-binding domain occupies 181–321 (NARALTRKIV…ALELLQKICE (141 aa)). Residue 194-201 (GPTNSGKT) coordinates ATP. The Helicase C-terminal domain maps to 331–508 (RYDRLTELTV…PTADQIELYA (178 aa)). The tract at residues 716–762 (EWDAQQVGQAAAASTSSKESQESPPDDSDDEDSYPGSYKKTRRKRRK) is disordered. Residues 721-730 (QVGQAAAAST) are compositionally biased toward polar residues. The span at 739-748 (PPDDSDDEDS) shows a compositional bias: acidic residues.

Belongs to the helicase family. It depends on Mg(2+) as a cofactor. The cofactor is Mn(2+).

Its subcellular location is the mitochondrion. It carries out the reaction ATP + H2O = ADP + phosphate + H(+). Major helicase player in mitochondrial RNA metabolism and maintenance. Likely component of the mitochondrial degradosome (mtEXO) complex, that degrades 3' overhang double-stranded RNA with a 3'-to-5' directionality in an ATP-dependent manner. ATPase and ATP-dependent multisubstrate helicase, able to unwind double-stranded (ds) DNA and RNA, and RNA/DNA heteroduplexes in the 5'-to-3' direction. Regulates mRNA stability and is required for the correct processing and maturation of mitochondrial transcripts. This chain is ATP-dependent RNA helicase SUV3 homolog, mitochondrial, found in Drosophila pseudoobscura pseudoobscura (Fruit fly).